A 441-amino-acid polypeptide reads, in one-letter code: Homoserine dehydrogenase (441 aa).

NADP(+)-binding residues include N17 and V18. NAD(+) contacts are provided by V18 and G47. V18 lines the NADPH pocket. The NADP(+) site is built by R49, R50, and K107. R49 provides a ligand contact to NADPH. K107 provides a ligand contact to NADPH. Na(+) is bound by residues E131, V134, G136, and I138. The NADP(+) site is built by G189 and E192. Residues E192 and D203 each coordinate L-homoserine. The active-site Proton donor is K207. G309 is an NADP(+) binding site. Residue G309 participates in NAD(+) binding. Residue G309 coordinates NADPH. The ACT domain occupies 356 to 435 (YVSMNVADKP…VVQGVTSVLR (80 aa)).

The protein belongs to the homoserine dehydrogenase family. A metal cation is required as a cofactor.

The enzyme catalyses L-homoserine + NADP(+) = L-aspartate 4-semialdehyde + NADPH + H(+). It catalyses the reaction L-homoserine + NAD(+) = L-aspartate 4-semialdehyde + NADH + H(+). Its pathway is amino-acid biosynthesis; L-methionine biosynthesis via de novo pathway; L-homoserine from L-aspartate: step 3/3. It participates in amino-acid biosynthesis; L-threonine biosynthesis; L-threonine from L-aspartate: step 3/5. Its function is as follows. Catalyzes the conversion of L-aspartate-beta-semialdehyde (L-Asa) to L-homoserine (L-Hse), the third step in the biosynthesis of threonine and methionine from aspartate. The protein is Homoserine dehydrogenase (hom) of Mycobacterium leprae (strain TN).